The primary structure comprises 291 residues: ATP phosphoribosyltransferase (291 aa).

Belongs to the ATP phosphoribosyltransferase family. Long subfamily. Requires Mg(2+) as cofactor.

Its subcellular location is the cytoplasm. It catalyses the reaction 1-(5-phospho-beta-D-ribosyl)-ATP + diphosphate = 5-phospho-alpha-D-ribose 1-diphosphate + ATP. It functions in the pathway amino-acid biosynthesis; L-histidine biosynthesis; L-histidine from 5-phospho-alpha-D-ribose 1-diphosphate: step 1/9. Feedback inhibited by histidine. Functionally, catalyzes the condensation of ATP and 5-phosphoribose 1-diphosphate to form N'-(5'-phosphoribosyl)-ATP (PR-ATP). Has a crucial role in the pathway because the rate of histidine biosynthesis seems to be controlled primarily by regulation of HisG enzymatic activity. The protein is ATP phosphoribosyltransferase of Geotalea uraniireducens (strain Rf4) (Geobacter uraniireducens).